The sequence spans 294 residues: Cytidine deaminase (294 aa).

2 CMP/dCMP-type deaminase domains span residues 48 to 168 (DEDA…FGPK) and 186 to 294 (LTGD…VLLA). 89-91 (NME) contacts substrate. Position 102 (histidine 102) interacts with Zn(2+). Catalysis depends on glutamate 104, which acts as the Proton donor. Positions 129 and 132 each coordinate Zn(2+).

Belongs to the cytidine and deoxycytidylate deaminase family. Homodimer. It depends on Zn(2+) as a cofactor.

It catalyses the reaction cytidine + H2O + H(+) = uridine + NH4(+). The catalysed reaction is 2'-deoxycytidine + H2O + H(+) = 2'-deoxyuridine + NH4(+). In terms of biological role, this enzyme scavenges exogenous and endogenous cytidine and 2'-deoxycytidine for UMP synthesis. This is Cytidine deaminase from Shigella dysenteriae serotype 1 (strain Sd197).